A 115-amino-acid chain; its full sequence is NAD(P)H-quinone oxidoreductase subunit M (115 aa).

Belongs to the complex I NdhM subunit family. In terms of assembly, NDH-1 can be composed of about 15 different subunits; different subcomplexes with different compositions have been identified which probably have different functions.

It is found in the cellular thylakoid membrane. It carries out the reaction a plastoquinone + NADH + (n+1) H(+)(in) = a plastoquinol + NAD(+) + n H(+)(out). It catalyses the reaction a plastoquinone + NADPH + (n+1) H(+)(in) = a plastoquinol + NADP(+) + n H(+)(out). Functionally, NDH-1 shuttles electrons from an unknown electron donor, via FMN and iron-sulfur (Fe-S) centers, to quinones in the respiratory and/or the photosynthetic chain. The immediate electron acceptor for the enzyme in this species is believed to be plastoquinone. Couples the redox reaction to proton translocation, and thus conserves the redox energy in a proton gradient. Cyanobacterial NDH-1 also plays a role in inorganic carbon-concentration. The chain is NAD(P)H-quinone oxidoreductase subunit M from Prochlorococcus marinus (strain MIT 9215).